The sequence spans 149 residues: Arginine repressor (149 aa).

The protein belongs to the ArgR family.

The protein resides in the cytoplasm. The protein operates within amino-acid biosynthesis; L-arginine biosynthesis [regulation]. Regulates arginine biosynthesis genes. This chain is Arginine repressor, found in Geobacillus kaustophilus (strain HTA426).